Reading from the N-terminus, the 341-residue chain is S-adenosylmethionine:tRNA ribosyltransferase-isomerase (341 aa).

The protein belongs to the QueA family. Monomer.

It is found in the cytoplasm. The catalysed reaction is 7-aminomethyl-7-carbaguanosine(34) in tRNA + S-adenosyl-L-methionine = epoxyqueuosine(34) in tRNA + adenine + L-methionine + 2 H(+). The protein operates within tRNA modification; tRNA-queuosine biosynthesis. In terms of biological role, transfers and isomerizes the ribose moiety from AdoMet to the 7-aminomethyl group of 7-deazaguanine (preQ1-tRNA) to give epoxyqueuosine (oQ-tRNA). The protein is S-adenosylmethionine:tRNA ribosyltransferase-isomerase of Staphylococcus aureus (strain USA300).